A 486-amino-acid polypeptide reads, in one-letter code: MQILSVTAEIFPLVKTGGLADVAGSLPKALRAHGIHTRSFVPGYPGVMRALSDATPVAEFESLFGERATLIAARAHGLDLFVLDAPAFYDRQGALYVDRHGRDYADNWKRFAAFSLVASQIARGLVPNWRPHIIHAHDWHAAMSLLYLKYAGDDTIPRVLTVHNLAFQGQFPAHYFPELGLPAEAYSIDGVEYYGDIGFLKGGLQAADAITVVSPTYAREIMSPAFGMGLEGVMNERHADVVGIVNGIDLEVWDPSSDPCIEHHYSARVPLRRLPNRQVLLRHFGLPDTCGPIFASVNRLTWQKGMDLLAATAGEIVKNGGTLIIHGQGEEKLEAAFMDLMRRFPQNISVSIGYDEHLAHRIHAGADAMLVPSRFEPCGLTQLYALRYGCVPVVARTGGLSETIIDANDAALHAHVATGIQFAPIDEDGLRHALRRTFRLYRLRRVWEGLRRQGMKTDCSWHRSAARYADLYSELLNPDMRLVGSA.

Lysine 15 serves as a coordination point for ADP-alpha-D-glucose.

Belongs to the glycosyltransferase 1 family. Bacterial/plant glycogen synthase subfamily.

It catalyses the reaction [(1-&gt;4)-alpha-D-glucosyl](n) + ADP-alpha-D-glucose = [(1-&gt;4)-alpha-D-glucosyl](n+1) + ADP + H(+). It functions in the pathway glycan biosynthesis; glycogen biosynthesis. Its function is as follows. Synthesizes alpha-1,4-glucan chains using ADP-glucose. This Rhizobium meliloti (strain 1021) (Ensifer meliloti) protein is Glycogen synthase 2 (glgA2).